We begin with the raw amino-acid sequence, 470 residues long: Annexin C1 (470 aa).

Residues 1 to 143 form a disordered region; sequence MYGQQNNYGA…QGQSPMMYLG (143 aa). The segment covering 15-34 has biased composition (low complexity); the sequence is QWGQAPPQGYQPGYQNGPPA. The span at 82–92 shows a compositional bias: pro residues; it reads PQPPFGAPSPA. Low complexity-rich tracts occupy residues 93 to 110 and 128 to 138; these read PAGY…YGAP and GYGSQPQGQSP. Annexin repeat units follow at residues 161–232, 233–304, 316–388, and 395–468; these read YDAR…LLSL, GPLG…MALS, QLVQ…FIAR, and DGVV…GIIE.

It belongs to the annexin family.

In terms of biological role, does not appear to play a major role in virulence. May play a role in titan cell formation. The chain is Annexin C1 from Cryptococcus neoformans var. grubii serotype A (strain H99 / ATCC 208821 / CBS 10515 / FGSC 9487) (Filobasidiella neoformans var. grubii).